Here is a 98-residue protein sequence, read N- to C-terminus: Cystatin-A (98 aa).

Residue Met1 is modified to N-acetylmethionine. A Secondary area of contact motif is present at residues 46–50 (QVVAG).

The protein belongs to the cystatin family.

Its subcellular location is the cytoplasm. This is an intracellular thiol proteinase inhibitor. This is Cystatin-A (CSTA) from Felis catus (Cat).